A 193-amino-acid polypeptide reads, in one-letter code: Ion-translocating oxidoreductase complex subunit A (193 aa).

6 helical membrane-spanning segments follow: residues 5 to 25, 39 to 59, 62 to 82, 102 to 122, 134 to 154, and 171 to 191; these read ALLFVSILLVNNFVLVKFLGL, IGMGMATTFVMTVGSMFSWLV, FILVPLDILYLRTMAFILVLA, LLGIFLPLITTNCAVLGVVLL, TIYGFGGAAGFSLVMVLFAAI, and SIALITAGLMSLAFMGFTGLV.

This sequence belongs to the NqrDE/RnfAE family. As to quaternary structure, the complex is composed of six subunits: RnfA, RnfB, RnfC, RnfD, RnfE and RnfG.

It is found in the cell inner membrane. In terms of biological role, part of a membrane-bound complex that couples electron transfer with translocation of ions across the membrane. This is Ion-translocating oxidoreductase complex subunit A from Pectobacterium carotovorum subsp. carotovorum (strain PC1).